The primary structure comprises 182 residues: Ribosome-recycling factor (182 aa).

This sequence belongs to the RRF family.

Its subcellular location is the cytoplasm. Functionally, responsible for the release of ribosomes from messenger RNA at the termination of protein biosynthesis. May increase the efficiency of translation by recycling ribosomes from one round of translation to another. In Thermosynechococcus vestitus (strain NIES-2133 / IAM M-273 / BP-1), this protein is Ribosome-recycling factor.